The sequence spans 707 residues: Polyribonucleotide nucleotidyltransferase (707 aa).

Positions 485 and 491 each coordinate Mg(2+). The KH domain occupies Pro-552 to Val-615. The 69-residue stretch at Gly-621 to Lys-689 folds into the S1 motif domain.

Belongs to the polyribonucleotide nucleotidyltransferase family. It depends on Mg(2+) as a cofactor.

Its subcellular location is the cytoplasm. The catalysed reaction is RNA(n+1) + phosphate = RNA(n) + a ribonucleoside 5'-diphosphate. Involved in mRNA degradation. Catalyzes the phosphorolysis of single-stranded polyribonucleotides processively in the 3'- to 5'-direction. This is Polyribonucleotide nucleotidyltransferase from Rhodospirillum centenum (strain ATCC 51521 / SW).